A 336-amino-acid polypeptide reads, in one-letter code: D-altritol 5-dehydrogenase (336 aa).

Zn(2+)-binding residues include cysteine 37, histidine 59, glutamate 60, cysteine 89, cysteine 92, cysteine 95, and cysteine 103.

This sequence belongs to the zinc-containing alcohol dehydrogenase family. Zn(2+) is required as a cofactor.

It catalyses the reaction D-altritol + NAD(+) = keto-D-tagatose + NADH + H(+). It participates in carbohydrate metabolism. Its function is as follows. Involved in D-altritol catabolism. Catalyzes the oxidation of D-altritol to D-tagatose. The protein is D-altritol 5-dehydrogenase of Agrobacterium fabrum (strain C58 / ATCC 33970) (Agrobacterium tumefaciens (strain C58)).